A 403-amino-acid chain; its full sequence is Argininosuccinate synthase (403 aa).

8 to 16 serves as a coordination point for ATP; the sequence is AYSGGLDTS. Tyr-87 lines the L-citrulline pocket. Gly-117 contributes to the ATP binding site. L-aspartate-binding residues include Thr-119, Asn-123, and Asp-124. Asn-123 is an L-citrulline binding site. Arg-127, Ser-175, Glu-259, and Tyr-271 together coordinate L-citrulline.

It belongs to the argininosuccinate synthase family. Type 1 subfamily. Homotetramer.

The protein localises to the cytoplasm. It catalyses the reaction L-citrulline + L-aspartate + ATP = 2-(N(omega)-L-arginino)succinate + AMP + diphosphate + H(+). Its pathway is amino-acid biosynthesis; L-arginine biosynthesis; L-arginine from L-ornithine and carbamoyl phosphate: step 2/3. This is Argininosuccinate synthase from Salinispora arenicola (strain CNS-205).